The chain runs to 73 residues: Antimicrobial peptide TsAP-2 (73 aa).

The first 22 residues, 1 to 22 (MQIKHLITIFFLVLIVADHCHA), serve as a signal peptide directing secretion. Lys-39 is modified (lysine amide). The propeptide occupies 45 to 73 (EITSQIEQYRNLQKREAELENLLANLPVY).

Belongs to the non-disulfide-bridged peptide (NDBP) superfamily. Short antimicrobial peptide (group 4) family. In terms of tissue distribution, expressed by the venom gland.

The protein localises to the secreted. Its function is as follows. Antimicrobial peptide. Has a high antibacterial activity against the Gram-positive bacterium S.aureus (MIC=5-17.30 uM), the methicillin-resistant S.aureus (MRSA) (MIC=17.30 uM), and E.faecalis (MIC=69.23 uM). Has antifungal activity against Candida spp. and one Cryptococcus neoformans strains with MICs values ranging from 6.25 to 100 uM. Also shows an inhibitory activity on C.albicans biofilms at high concentrations. Has a moderate hemolytic potency (18% at 20 uM). Also inhibits the growth of the five human cancer cell lines tested (the squamous carcinoma cell line H157 (IC(50)=4.1 uM), the lung adenocarcinoma cell line H838 (11.0 uM), the breast carcinoma cell line MCF-7 (6.4 uM), the androgen-independent prostate adenocarcinoma cell line PC3 (13.3 uM) and the glioblastoma cell line U251-MG (15.4 uM)). In the model of polymicrobial sepsis, it exhibits an antibiotic effect, reducing the levels of microorganisms in the infectious focus and the inflammatory responses in the lung and cecum of septic animals. The chain is Antimicrobial peptide TsAP-2 from Tityus serrulatus (Brazilian scorpion).